The sequence spans 390 residues: GTPase Obg (390 aa).

Positions 1–159 (MKFVDEASIL…RDLLLELMLL (159 aa)) constitute an Obg domain. The disordered stretch occupies residues 127–147 (NTRFKSSVNRTPRQKTNGTPG). Polar residues predominate over residues 129–145 (RFKSSVNRTPRQKTNGT). An OBG-type G domain is found at 160–333 (ADVGMLGMPN…LCWDVMTFII (174 aa)). Residues 166-173 (GMPNAGKS), 191-195 (FTTLV), 213-216 (DIPG), 283-286 (NKID), and 314-316 (SAA) contribute to the GTP site. Residues serine 173 and threonine 193 each coordinate Mg(2+).

Belongs to the TRAFAC class OBG-HflX-like GTPase superfamily. OBG GTPase family. Monomer. Mg(2+) is required as a cofactor.

Its subcellular location is the cytoplasm. Functionally, an essential GTPase which binds GTP, GDP and possibly (p)ppGpp with moderate affinity, with high nucleotide exchange rates and a fairly low GTP hydrolysis rate. Plays a role in control of the cell cycle, stress response, ribosome biogenesis and in those bacteria that undergo differentiation, in morphogenesis control. This Salmonella paratyphi A (strain ATCC 9150 / SARB42) protein is GTPase Obg.